Reading from the N-terminus, the 378-residue chain is N-acetyldiaminopimelate deacetylase (378 aa).

Aspartate 65 is a catalytic residue. The active-site Proton acceptor is glutamate 124.

The protein belongs to the peptidase M20A family. N-acetyldiaminopimelate deacetylase subfamily.

It catalyses the reaction N-acetyl-(2S,6S)-2,6-diaminopimelate + H2O = (2S,6S)-2,6-diaminopimelate + acetate. It participates in amino-acid biosynthesis; L-lysine biosynthesis via DAP pathway; LL-2,6-diaminopimelate from (S)-tetrahydrodipicolinate (acetylase route): step 3/3. Functionally, catalyzes the conversion of N-acetyl-diaminopimelate to diaminopimelate and acetate. In Anoxybacillus flavithermus (strain DSM 21510 / WK1), this protein is N-acetyldiaminopimelate deacetylase.